The chain runs to 476 residues: Protein DETOXIFICATION 17 (476 aa).

The next 12 helical transmembrane spans lie at 29 to 51 (LWLS…ISVM), 70 to 90 (FASV…ETLC), 111 to 131 (FVLL…EQIL), 140 to 160 (IASV…AYGL), 177 to 197 (VFVC…LFVL), 205 to 225 (GAAL…SCYV), 252 to 272 (IAFP…LLVL), 286 to 306 (VLSI…GLGG), 326 to 346 (LAVY…VTVL), 363 to 383 (IIAY…LDGL), 405 to 425 (LGSY…HFHI), and 431 to 451 (WLGI…VTIF).

It belongs to the multi antimicrobial extrusion (MATE) (TC 2.A.66.1) family.

The protein localises to the membrane. In Arabidopsis thaliana (Mouse-ear cress), this protein is Protein DETOXIFICATION 17.